Reading from the N-terminus, the 136-residue chain is MAASRYRRFLKLCEEWPVDETKRGRDLGAYLRQRVAQAFREGENTQVAEPEACDEMYESLARLHSNYYKHKYPRPRETSFSGLSLEEYKLILSTDTLDEFKEMNKGTWKKLQEKFAPGSPEGKHTAWARALPRPRT.

A mitochondrion-targeting transit peptide spans 1–13; it reads MAASRYRRFLKLC. Residues 114–136 form a disordered region; sequence KFAPGSPEGKHTAWARALPRPRT.

Interacts with UQCC1. Forms a complex, named COMB/coordinator of mitochondrial CYTB biogenesis, composed of UQCC1, UQCC2, UQCC4, UQCC5 and UQCC6; stabilizes nascent cytochrome b/MT-CYB and promotes its membrane insertion. Forms a complex, named COMB/coordinator of mitochondrial CYTB biogenesis, composed of UQCC1, UQCC2, UQCC4, UQCC5 and UQCC6; stabilizes nascent cytochrome b/MT-CYB and promotes its membrane insertion. Forms a complex, named COMA, composed of UQCC1, UQCC2 and UQCC4; activates MT-CYB translation. Forms a complex, named COMC, composed of UQCC1, UQCC2; UQCC3 and UQCC4; mediates MT-CYB hemylation and association with the first nuclear-encoded CIII subunit UQCRQ.

The protein resides in the mitochondrion matrix. Its subcellular location is the mitochondrion nucleoid. It localises to the mitochondrion. The protein localises to the mitochondrion intermembrane space. It is found in the mitochondrion inner membrane. Its function is as follows. Required for the assembly of the ubiquinol-cytochrome c reductase complex (mitochondrial respiratory chain complex III or cytochrome b-c1 complex). Plays a role in the modulation of respiratory chain activities such as oxygen consumption and ATP production and via its modulation of the respiratory chain activity can regulate skeletal muscle differentiation and insulin secretion by pancreatic beta-cells. Involved in cytochrome b translation and/or stability. This is Ubiquinol-cytochrome c reductase complex assembly factor 2 (UQCC2) from Bos taurus (Bovine).